Consider the following 100-residue polypeptide: Urease subunit gamma (100 aa).

Belongs to the urease gamma subunit family. In terms of assembly, heterotrimer of UreA (gamma), UreB (beta) and UreC (alpha) subunits. Three heterotrimers associate to form the active enzyme.

Its subcellular location is the cytoplasm. It carries out the reaction urea + 2 H2O + H(+) = hydrogencarbonate + 2 NH4(+). Its pathway is nitrogen metabolism; urea degradation; CO(2) and NH(3) from urea (urease route): step 1/1. The protein is Urease subunit gamma of Nitrosospira multiformis (strain ATCC 25196 / NCIMB 11849 / C 71).